Here is a 502-residue protein sequence, read N- to C-terminus: ATP synthase subunit alpha, sodium ion specific (502 aa).

An ATP-binding site is contributed by 169 to 176 (GDRQTGKT).

This sequence belongs to the ATPase alpha/beta chains family. F-type ATPases have 2 components, CF(1) - the catalytic core - and CF(0) - the membrane proton channel. CF(1) has five subunits: alpha(3), beta(3), gamma(1), delta(1), epsilon(1). CF(0) has three main subunits: a, b and c.

It is found in the cell membrane. It catalyses the reaction 4 Na(+)(in) + ATP + H2O = 4 Na(+)(out) + ADP + phosphate + H(+). With respect to regulation, inhibited by nitrate. Produces ATP from ADP in the presence of a sodium ion gradient across the membrane. The alpha chain is a regulatory subunit. The polypeptide is ATP synthase subunit alpha, sodium ion specific (Acetobacterium woodii (strain ATCC 29683 / DSM 1030 / JCM 2381 / KCTC 1655 / WB1)).